A 299-amino-acid chain; its full sequence is Bifunctional protein FolD (299 aa).

NADP(+) contacts are provided by residues 179–181 (GPG) and Ile-245.

It belongs to the tetrahydrofolate dehydrogenase/cyclohydrolase family. In terms of assembly, homodimer.

The catalysed reaction is (6R)-5,10-methylene-5,6,7,8-tetrahydrofolate + NADP(+) = (6R)-5,10-methenyltetrahydrofolate + NADPH. It catalyses the reaction (6R)-5,10-methenyltetrahydrofolate + H2O = (6R)-10-formyltetrahydrofolate + H(+). Its pathway is one-carbon metabolism; tetrahydrofolate interconversion. In terms of biological role, catalyzes the oxidation of 5,10-methylenetetrahydrofolate to 5,10-methenyltetrahydrofolate and then the hydrolysis of 5,10-methenyltetrahydrofolate to 10-formyltetrahydrofolate. The polypeptide is Bifunctional protein FolD (Deinococcus radiodurans (strain ATCC 13939 / DSM 20539 / JCM 16871 / CCUG 27074 / LMG 4051 / NBRC 15346 / NCIMB 9279 / VKM B-1422 / R1)).